A 118-amino-acid polypeptide reads, in one-letter code: Small ribosomal subunit protein uS13 (118 aa).

A disordered region spans residues Gly-94–Lys-118.

The protein belongs to the universal ribosomal protein uS13 family. Part of the 30S ribosomal subunit. Forms a loose heterodimer with protein S19. Forms two bridges to the 50S subunit in the 70S ribosome.

Its function is as follows. Located at the top of the head of the 30S subunit, it contacts several helices of the 16S rRNA. In the 70S ribosome it contacts the 23S rRNA (bridge B1a) and protein L5 of the 50S subunit (bridge B1b), connecting the 2 subunits; these bridges are implicated in subunit movement. Contacts the tRNAs in the A and P-sites. The chain is Small ribosomal subunit protein uS13 from Haemophilus ducreyi (strain 35000HP / ATCC 700724).